Reading from the N-terminus, the 523-residue chain is Cytochrome P450 52A3-A (523 aa).

A helical transmembrane segment spans residues 17–34 (WYTILFGAAVTYFLSIAL). Heme is bound at residue C471.

It belongs to the cytochrome P450 family. Heme is required as a cofactor.

It is found in the membrane. In terms of biological role, together with an NADPH cytochrome P450 the enzyme system catalyzes the terminal hydroxylation as the first step in the assimilation of alkanes and fatty acids. The polypeptide is Cytochrome P450 52A3-A (CYP52A3-A) (Candida maltosa (Yeast)).